Here is a 234-residue protein sequence, read N- to C-terminus: Demethylmenaquinone methyltransferase (234 aa).

S-adenosyl-L-methionine is bound by residues threonine 58, aspartate 79, and 106–107 (NA).

Belongs to the class I-like SAM-binding methyltransferase superfamily. MenG/UbiE family.

The enzyme catalyses a 2-demethylmenaquinol + S-adenosyl-L-methionine = a menaquinol + S-adenosyl-L-homocysteine + H(+). Its pathway is quinol/quinone metabolism; menaquinone biosynthesis; menaquinol from 1,4-dihydroxy-2-naphthoate: step 2/2. Functionally, methyltransferase required for the conversion of demethylmenaquinol (DMKH2) to menaquinol (MKH2). In Geobacillus stearothermophilus (Bacillus stearothermophilus), this protein is Demethylmenaquinone methyltransferase.